The primary structure comprises 264 residues: Apolipoprotein A-I (264 aa).

Residues 1 to 18 (MKAVVLTVAVLFLTGSQA) form the signal peptide. Tandem repeats lie at residues 67–88 (LKLL…EQIG) and 89–110 (PVSQ…QEMN). A 10 X approximate tandem repeats region spans residues 67–264 (LKLLDNWDSL…DEATKKLNTQ (198 aa)). The residue at position 109 (M109) is a Methionine sulfoxide. The 3; half-length repeat unit spans residues 111-121 (KDLEEVKRKVQ). Tandem repeats lie at residues 122–143 (PYLD…QQVE), 144–165 (PLSK…EKLS), and 166–187 (PLGQ…THLA). The stretch at 188–207 (PYSDELRQRLAARLEALKEG) is one 7; truncated repeat. The stretch at 208–229 (SSFAEYQAKATEHLSALGEKAK) is repeat 8. One copy of the 9; half-length repeat lies at 230-240 (PALEDLRQGLL). Repeat 10 spans residues 241 to 264 (PVLESLKLSFWSAVDEATKKLNTQ).

The protein belongs to the apolipoprotein A1/A4/E family. As to quaternary structure, homodimer. Interacts with APOA1BP and CLU. Component of a sperm activating protein complex (SPAP), consisting of APOA1, an immunoglobulin heavy chain, an immunoglobulin light chain and albumin. Interacts with NDRG1. Interacts with SCGB3A2. Interacts with NAXE and YJEFN3. In terms of processing, glycosylated. Post-translationally, palmitoylated. Phosphorylation sites are present in the extracellular medium.

The protein resides in the secreted. Functionally, participates in the reverse transport of cholesterol from tissues to the liver for excretion by promoting cholesterol efflux from tissues and by acting as a cofactor for the lecithin cholesterol acyltransferase (LCAT). As part of the SPAP complex, activates spermatozoa motility. In Ictidomys tridecemlineatus (Thirteen-lined ground squirrel), this protein is Apolipoprotein A-I (APOA1).